A 280-amino-acid polypeptide reads, in one-letter code: ATP synthase subunit a (280 aa).

7 helical membrane-spanning segments follow: residues 45–65 (AINV…LFLF), 105–125 (LVAP…LMDL), 126–146 (LPVD…LKVV), 159–179 (LSIF…GGFF), 190–210 (FLFP…PISL), 223–243 (MIFI…LFGG), and 250–270 (AVFH…LTIV).

Belongs to the ATPase A chain family. In terms of assembly, F-type ATPases have 2 components, CF(1) - the catalytic core - and CF(0) - the membrane proton channel. CF(1) has five subunits: alpha(3), beta(3), gamma(1), delta(1), epsilon(1). CF(0) has three main subunits: a(1), b(2) and c(9-12). The alpha and beta chains form an alternating ring which encloses part of the gamma chain. CF(1) is attached to CF(0) by a central stalk formed by the gamma and epsilon chains, while a peripheral stalk is formed by the delta and b chains.

The protein resides in the cell inner membrane. In terms of biological role, key component of the proton channel; it plays a direct role in the translocation of protons across the membrane. This chain is ATP synthase subunit a, found in Thiobacillus denitrificans (strain ATCC 25259 / T1).